A 602-amino-acid chain; its full sequence is Glutamyl-tRNA(Gln) amidotransferase subunit B, mitochondrial (602 aa).

The N-terminal 56 residues, 1–56, are a transit peptide targeting the mitochondrion; the sequence is MFRSCLRHCRRATVRSRTCPRCSHHEIPQLQVVQRQISLSSSFPHIRRLQTSSTDT.

It belongs to the GatB/GatE family. GatB subfamily. In terms of assembly, subunit of the heterotrimeric GatCAB amidotransferase (AdT) complex, composed of A, B and C subunits.

Its subcellular location is the mitochondrion. The enzyme catalyses L-glutamyl-tRNA(Gln) + L-glutamine + ATP + H2O = L-glutaminyl-tRNA(Gln) + L-glutamate + ADP + phosphate + H(+). Allows the formation of correctly charged Gln-tRNA(Gln) through the transamidation of misacylated Glu-tRNA(Gln) in the mitochondria. The reaction takes place in the presence of glutamine and ATP through an activated gamma-phospho-Glu-tRNA(Gln). This Emericella nidulans (strain FGSC A4 / ATCC 38163 / CBS 112.46 / NRRL 194 / M139) (Aspergillus nidulans) protein is Glutamyl-tRNA(Gln) amidotransferase subunit B, mitochondrial (nempA).